The following is a 541-amino-acid chain: Chaperonin GroEL 1 (541 aa).

ATP contacts are provided by residues 29-32 (TLGP), 86-90 (DGTTT), Gly413, 477-479 (NAA), and Asp493.

The protein belongs to the chaperonin (HSP60) family. Forms a cylinder of 14 subunits composed of two heptameric rings stacked back-to-back. Interacts with the co-chaperonin GroES.

The protein resides in the cytoplasm. It carries out the reaction ATP + H2O + a folded polypeptide = ADP + phosphate + an unfolded polypeptide.. Together with its co-chaperonin GroES, plays an essential role in assisting protein folding. The GroEL-GroES system forms a nano-cage that allows encapsulation of the non-native substrate proteins and provides a physical environment optimized to promote and accelerate protein folding. The polypeptide is Chaperonin GroEL 1 (Paenarthrobacter aurescens (strain TC1)).